The chain runs to 80 residues: MSDNSIEEKVRSIIVDQLGVESDKVTADAKFIEDLGADSLDTVELVMAFEENFDIEVPDEEAEKLQSVADVVAYIEKVQG.

Positions 4–79 (NSIEEKVRSI…DVVAYIEKVQ (76 aa)) constitute a Carrier domain. At Ser-39 the chain carries O-(pantetheine 4'-phosphoryl)serine.

This sequence belongs to the acyl carrier protein (ACP) family. Post-translationally, 4'-phosphopantetheine is transferred from CoA to a specific serine of apo-ACP by AcpS. This modification is essential for activity because fatty acids are bound in thioester linkage to the sulfhydryl of the prosthetic group.

The protein resides in the cytoplasm. The protein operates within lipid metabolism; fatty acid biosynthesis. Functionally, carrier of the growing fatty acid chain in fatty acid biosynthesis. In Akkermansia muciniphila (strain ATCC BAA-835 / DSM 22959 / JCM 33894 / BCRC 81048 / CCUG 64013 / CIP 107961 / Muc), this protein is Acyl carrier protein.